Reading from the N-terminus, the 149-residue chain is Calmodulin, striated muscle (149 aa).

EF-hand domains follow at residues 8–43, 44–79, 81–116, and 117–149; these read EQIA…LGQN, PTEA…KMRD, DSEE…LGEK, and LTDE…MTEK. Ca(2+)-binding residues include aspartate 21, aspartate 23, aspartate 25, cysteine 27, glutamate 32, aspartate 57, aspartate 59, serine 61, threonine 63, glutamate 68, aspartate 94, aspartate 96, asparagine 98, tyrosine 100, and glutamate 105. Lysine 116 carries the post-translational modification N6,N6,N6-trimethyllysine. Ca(2+)-binding residues include aspartate 130, asparagine 132, aspartate 134, glutamine 136, and glutamate 141.

It belongs to the calmodulin family.

This is Calmodulin, striated muscle (CCM1) from Gallus gallus (Chicken).